Consider the following 257-residue polypeptide: Imidazole glycerol phosphate synthase subunit HisF (257 aa).

Catalysis depends on residues Asp11 and Asp130.

Belongs to the HisA/HisF family. Heterodimer of HisH and HisF.

The protein localises to the cytoplasm. It carries out the reaction 5-[(5-phospho-1-deoxy-D-ribulos-1-ylimino)methylamino]-1-(5-phospho-beta-D-ribosyl)imidazole-4-carboxamide + L-glutamine = D-erythro-1-(imidazol-4-yl)glycerol 3-phosphate + 5-amino-1-(5-phospho-beta-D-ribosyl)imidazole-4-carboxamide + L-glutamate + H(+). The protein operates within amino-acid biosynthesis; L-histidine biosynthesis; L-histidine from 5-phospho-alpha-D-ribose 1-diphosphate: step 5/9. Its function is as follows. IGPS catalyzes the conversion of PRFAR and glutamine to IGP, AICAR and glutamate. The HisF subunit catalyzes the cyclization activity that produces IGP and AICAR from PRFAR using the ammonia provided by the HisH subunit. This chain is Imidazole glycerol phosphate synthase subunit HisF, found in Pseudoalteromonas atlantica (strain T6c / ATCC BAA-1087).